Here is a 384-residue protein sequence, read N- to C-terminus: Gastrin-releasing peptide receptor (384 aa).

Topologically, residues 1–38 (MALNDCFLLNLEVDHFMHCNISSHSADLPVNDDWSHPG) are extracellular. Asparagine 20 carries N-linked (GlcNAc...) asparagine glycosylation. A helical transmembrane segment spans residues 39–62 (ILYVIPAVYGVIILIGLIGNITLI). At 63–76 (KIFCTVKSMRNVPN) the chain is on the cytoplasmic side. Residues 77–96 (LFISSLALGDLLLLITCAPV) traverse the membrane as a helical segment. Over 97–114 (DASRYLADRWLFGRIGCK) the chain is Extracellular. Cysteine 113 and cysteine 196 are disulfide-bonded. Residues 115–136 (LIPFIQLTSVGVSVFTLTALSA) form a helical membrane-spanning segment. The Cytoplasmic portion of the chain corresponds to 137–152 (DRYKAIVRPMDIQASH). The chain crosses the membrane as a helical span at residues 153-174 (ALMKICLKAAFIWIISMLLAIP). Over 175-208 (EAVFSDLHPFHEESTNQTFISCAPYPHSNELHPK) the chain is Extracellular. The chain crosses the membrane as a helical span at residues 209–234 (IHSMASFLVFYVIPLSIISVYYYFIA). Over 235–264 (KNLIQSAYNLPVEGNIHVKKQIESRKRLAK) the chain is Cytoplasmic. Residues 265–285 (TVLVFVGLFAFCWLPNHVIYL) form a helical membrane-spanning segment. The Extracellular segment spans residues 286–298 (YRSYHYSEVDTSM). Residues 299-325 (LHFVTSICARLLAFTNSCVNPFALYLL) form a helical membrane-spanning segment. Topologically, residues 326-384 (SKSFRKQFNTQLLCCQPGLIIRSHSTGRSTTCMTSLKSTNPSVATFSLINGNICHERYV) are cytoplasmic. Residue cysteine 339 is the site of S-palmitoyl cysteine attachment. Serine 350 carries the phosphoserine modification.

The protein belongs to the G-protein coupled receptor 1 family. Highly expressed in pancreas. Also expressed in stomach, adrenal cortex and brain. In brain, expressed in cells throughout the cortex.

The protein localises to the cell membrane. Functionally, receptor for gastrin-releasing peptide (GRP). Signals via association with G proteins that activate a phosphatidylinositol-calcium second messenger system, resulting in Akt phosphorylation. Contributes to the regulation of food intake. Contributes to the perception of prurient stimuli and transmission of itch signals in the spinal cord that promote scratching behavior, but does not play a role in the perception of pain. Contributes primarily to nonhistaminergic itch sensation. In one study, shown to act in the amygdala as part of an inhibitory network which inhibits memory specifically related to learned fear. In another study, shown to contribute to disinhibition of glutamatergic cells in the auditory cortex via signaling on vasoactive intestinal peptide-expressing cells which leads to enhanced auditory fear memories. Contributes to the induction of sighing through signaling in the pre-Botzinger complex, a cluster of several thousand neurons in the ventrolateral medulla responsible for inspiration during respiratory activity. This chain is Gastrin-releasing peptide receptor (GRPR), found in Homo sapiens (Human).